Reading from the N-terminus, the 98-residue chain is MPTETERCIESLIAVFQKYSGKDGNNTQLSKTEFLSFMNTELAAFTKNQKDPGVLDRMMKKLDLNCDGQLDFQEFLNLIGGLAIACHDSFIQTSQKRI.

Position 5 is a phosphothreonine (Thr5). 2 EF-hand domains span residues 8 to 44 (CIESLIAVFQKYSGKDGNNTQLSKTEFLSFMNTELAA) and 50 to 85 (KDPGVLDRMMKKLDLNCDGQLDFQEFLNLIGGLAIA). The residue at position 22 (Lys22) is an N6-acetyllysine. Ca(2+) is bound by residues Asn26, Gln28, Glu33, Asp63, Asn65, Asp67, Gln69, and Glu74.

It belongs to the S-100 family. In terms of assembly, homodimer; disulfide-linked. Phosphorylation at Thr-5 significantly suppresses homodimerization and promotes association with NCL/nucleolin which induces nuclear translocation.

The protein localises to the cytoplasm. It localises to the nucleus. Facilitates the differentiation and the cornification of keratinocytes. This is Protein S100-A11 (S100a11) from Mus musculus (Mouse).